We begin with the raw amino-acid sequence, 204 residues long: MSDQLIDRTMAFAGILQAVAQVQHIARHGNSDRDSLAACLNTVLVTNPDTTSDVYADKVALNKGYQLIINQLGDAKDKDVEVTRYLVGILALERKLARGNAMSILSERINQIHRQLHHFEITDEQVIANFAGIYSDIISTLGPKIQISGNPEYLKQSQVQEKIRALLLSAMRSAVLWRQLGGKRRHLVFARKTIVDTAKKSLTL.

This sequence belongs to the HflD family.

The protein localises to the cytoplasm. It is found in the cell inner membrane. In Shewanella sediminis (strain HAW-EB3), this protein is High frequency lysogenization protein HflD homolog.